A 209-amino-acid polypeptide reads, in one-letter code: Imidazole glycerol phosphate synthase subunit HisH (209 aa).

In terms of domain architecture, Glutamine amidotransferase type-1 spans 1–205; it reads MIAIIDYGMG…QGVVEAWKSS (205 aa). Catalysis depends on cysteine 79, which acts as the Nucleophile. Catalysis depends on residues histidine 180 and glutamate 182.

In terms of assembly, heterodimer of HisH and HisF.

The protein localises to the cytoplasm. The enzyme catalyses 5-[(5-phospho-1-deoxy-D-ribulos-1-ylimino)methylamino]-1-(5-phospho-beta-D-ribosyl)imidazole-4-carboxamide + L-glutamine = D-erythro-1-(imidazol-4-yl)glycerol 3-phosphate + 5-amino-1-(5-phospho-beta-D-ribosyl)imidazole-4-carboxamide + L-glutamate + H(+). The catalysed reaction is L-glutamine + H2O = L-glutamate + NH4(+). Its pathway is amino-acid biosynthesis; L-histidine biosynthesis; L-histidine from 5-phospho-alpha-D-ribose 1-diphosphate: step 5/9. In terms of biological role, IGPS catalyzes the conversion of PRFAR and glutamine to IGP, AICAR and glutamate. The HisH subunit catalyzes the hydrolysis of glutamine to glutamate and ammonia as part of the synthesis of IGP and AICAR. The resulting ammonia molecule is channeled to the active site of HisF. In Bacillus cereus (strain G9842), this protein is Imidazole glycerol phosphate synthase subunit HisH.